Consider the following 149-residue polypeptide: MAFHSLLLLCLAGLLFVSEAGPVAHGGEDSKCPLMVKVLDAVRGRPAVNVDVKVFKKTEKQTWELFASGKTNDNGEIHELTSDDKFGEGLYKVEFDTISYWKALGVSPFHEYADVVFTANDAGHRHYTIAAQLSPYSFSTTAIVSNPTE.

The first 20 residues, methionine 1–alanine 20, serve as a signal peptide directing secretion. A Sulfocysteine modification is found at cysteine 32. Lysine 37 serves as a coordination point for L-thyroxine. 4-carboxyglutamate is present on glutamate 64. 2 residues coordinate L-thyroxine: glutamate 76 and serine 139.

The protein belongs to the transthyretin family. As to quaternary structure, homotetramer. Dimer of dimers. In the homotetramer, subunits assemble around a central channel that can accommodate two ligand molecules. Interacts with RBP4. In terms of processing, sulfonation of the reactive cysteine Cys-32 enhances the stability of the native conformation of TTR, avoiding misassembly of the protein leading to amyloid formation. As to expression, detected in plasma (at protein level). Detected in liver.

It is found in the secreted. Functionally, thyroid hormone-binding protein. Probably transports thyroxine from the bloodstream to the brain. This Petaurus breviceps (Australian sugar glider) protein is Transthyretin (TTR).